A 467-amino-acid polypeptide reads, in one-letter code: Dimethylamine methyltransferase MtbB1 (467 aa).

Position 356 (Pyl356) is a non-standard amino acid, pyrrolysine.

This sequence belongs to the dimethylamine methyltransferase family. May form homotetramers or homopentamers.

It carries out the reaction Co(I)-[dimethylamine-specific corrinoid protein] + dimethylamine + H(+) = methyl-Co(III)-[dimethylamine-specific corrinoid protein] + methylamine. The protein operates within one-carbon metabolism; methanogenesis from dimethylamine. Its function is as follows. Catalyzes the transfer of a methyl group from dimethylamine to the corrinoid cofactor of MtbC. The major or perhaps only DMA methyltransferase expressed under inducing conditions. This chain is Dimethylamine methyltransferase MtbB1, found in Methanosarcina barkeri.